The following is a 563-amino-acid chain: Arginine--tRNA ligase (563 aa).

The short motif at 120-130 (PNIAKPFHIGH) is the 'HIGH' region element.

It belongs to the class-I aminoacyl-tRNA synthetase family. In terms of assembly, monomer.

It is found in the cytoplasm. The enzyme catalyses tRNA(Arg) + L-arginine + ATP = L-arginyl-tRNA(Arg) + AMP + diphosphate. This chain is Arginine--tRNA ligase, found in Clostridium botulinum (strain Langeland / NCTC 10281 / Type F).